The sequence spans 1057 residues: Carbamoyl phosphate synthase large chain (1057 aa).

A carboxyphosphate synthetic domain region spans residues 1 to 401 (MPKRNDIKTI…SLLKAIRSLE (401 aa)). ATP is bound by residues Arg129, Arg169, Gly175, Gly176, Lys208, Ile210, Glu215, Gly241, Ile242, His243, Gln284, and Glu298. Residues 133-327 (RTLMNDLNVP…IAKLAAKIAV (195 aa)) form the ATP-grasp 1 domain. 3 residues coordinate Mg(2+): Gln284, Glu298, and Asn300. Residues Gln284, Glu298, and Asn300 each coordinate Mn(2+). The interval 402-546 (YGVHHLGLPN…YGTYETENES (145 aa)) is oligomerization domain. The interval 547–929 (IVTDKEKILV…ALFKGLTGSG (383 aa)) is carbamoyl phosphate synthetic domain. The ATP-grasp 2 domain occupies 671–861 (EALLRKINVP…MAQLAMRAII (191 aa)). ATP is bound by residues Arg707, Arg746, Leu748, Glu752, Gly777, Val778, His779, Ser780, Gln820, and Glu832. Mg(2+) contacts are provided by Gln820, Glu832, and Asn834. 3 residues coordinate Mn(2+): Gln820, Glu832, and Asn834. An MGS-like domain is found at 930-1057 (VEVKDHGTVL…ESMTFTMRQM (128 aa)). The segment at 930–1057 (VEVKDHGTVL…ESMTFTMRQM (128 aa)) is allosteric domain.

It belongs to the CarB family. As to quaternary structure, composed of two chains; the small (or glutamine) chain promotes the hydrolysis of glutamine to ammonia, which is used by the large (or ammonia) chain to synthesize carbamoyl phosphate. Tetramer of heterodimers (alpha,beta)4. The cofactor is Mg(2+). It depends on Mn(2+) as a cofactor.

The enzyme catalyses hydrogencarbonate + L-glutamine + 2 ATP + H2O = carbamoyl phosphate + L-glutamate + 2 ADP + phosphate + 2 H(+). The catalysed reaction is hydrogencarbonate + NH4(+) + 2 ATP = carbamoyl phosphate + 2 ADP + phosphate + 2 H(+). The protein operates within amino-acid biosynthesis; L-arginine biosynthesis; carbamoyl phosphate from bicarbonate: step 1/1. It functions in the pathway pyrimidine metabolism; UMP biosynthesis via de novo pathway; (S)-dihydroorotate from bicarbonate: step 1/3. Its function is as follows. Large subunit of the glutamine-dependent carbamoyl phosphate synthetase (CPSase). CPSase catalyzes the formation of carbamoyl phosphate from the ammonia moiety of glutamine, carbonate, and phosphate donated by ATP, constituting the first step of 2 biosynthetic pathways, one leading to arginine and/or urea and the other to pyrimidine nucleotides. The large subunit (synthetase) binds the substrates ammonia (free or transferred from glutamine from the small subunit), hydrogencarbonate and ATP and carries out an ATP-coupled ligase reaction, activating hydrogencarbonate by forming carboxy phosphate which reacts with ammonia to form carbamoyl phosphate. In Staphylococcus aureus (strain MRSA252), this protein is Carbamoyl phosphate synthase large chain.